The primary structure comprises 285 residues: Inositol oxygenase (285 aa).

Arginine 29 provides a ligand contact to substrate. The residue at position 33 (serine 33) is a Phosphoserine. 85–88 serves as a coordination point for substrate; it reads DESD. Residues histidine 98, histidine 123, and aspartate 124 each coordinate Fe cation. Substrate-binding positions include lysine 127 and 141–142; that span reads GD. Histidine 194, histidine 220, and aspartate 253 together coordinate Fe cation. Residue 220–221 participates in substrate binding; that stretch reads HS.

It belongs to the myo-inositol oxygenase family. Fe cation is required as a cofactor. Kidney specific. Renal proximal tubules.

It localises to the cytoplasm. It carries out the reaction myo-inositol + O2 = D-glucuronate + H2O + H(+). It participates in polyol metabolism; myo-inositol degradation into D-glucuronate; D-glucuronate from myo-inositol: step 1/1. The protein is Inositol oxygenase (Miox) of Mus musculus (Mouse).